The following is a 474-amino-acid chain: Bifunctional ribulose 5-phosphate reductase/CDP-ribitol pyrophosphorylase Bcs1 (474 aa).

Positions 1–238 (MNKNKNIGII…DKLFQSRSHF (238 aa)) are ribitol-5-phosphate cytidylyltransferase. The segment at 250–474 (YDMKDQVLVV…ITNILADLYK (225 aa)) is ribulose-5-phosphate reductase.

This sequence in the N-terminal section; belongs to the IspD/TarI cytidylyltransferase family. It in the C-terminal section; belongs to the short-chain dehydrogenases/reductases (SDR) family. As to quaternary structure, monomer.

It carries out the reaction D-ribitol 5-phosphate + CTP + H(+) = CDP-L-ribitol + diphosphate. It catalyses the reaction D-ribitol 5-phosphate + NADP(+) = D-ribulose 5-phosphate + NADPH + H(+). The protein operates within capsule biogenesis; capsule polysaccharide biosynthesis. Its function is as follows. Catalyzes the NADPH-dependent reduction of D-ribulose 5-phosphate to D-ribitol 5-phosphate and the further reaction of D-ribitol 5-phosphate with CTP to form CDP-ribitol. In Haemophilus influenzae, this protein is Bifunctional ribulose 5-phosphate reductase/CDP-ribitol pyrophosphorylase Bcs1.